Reading from the N-terminus, the 186-residue chain is Large ribosomal subunit protein uL22 (186 aa).

A disordered region spans residues 159 to 186 (KAAENEPAKKKLSKKKLQRQKEKMMRNE). Over residues 177–186 (RQKEKMMRNE) the composition is skewed to basic and acidic residues.

Belongs to the universal ribosomal protein uL22 family.

The polypeptide is Large ribosomal subunit protein uL22 (RpL17) (Aedes albopictus (Asian tiger mosquito)).